The sequence spans 78 residues: Putative gastrointestinal growth factor xP1 (78 aa).

A signal peptide spans 1–23 (MNYKVFCLVAIALIVGSIGSANG). In terms of domain architecture, P-type spans 30–73 (EQCSVERLARVNCGYSGITPQECTKQGCCFDSTIQDAPWCFYPR). 3 disulfides stabilise this stretch: C32–C58, C42–C57, and C52–C69.

As to expression, stomach mucosa.

Its subcellular location is the secreted. In terms of biological role, may act as a growth factor. In Xenopus laevis (African clawed frog), this protein is Putative gastrointestinal growth factor xP1 (p1).